A 449-amino-acid chain; its full sequence is Glutamyl-tRNA reductase (449 aa).

Substrate is bound by residues Thr49–Arg52, Ser107, Glu112–Gln114, and Gln118. The Nucleophile role is filled by Cys50. Gly187–Ile192 provides a ligand contact to NADP(+). A disordered region spans residues Gln418 to Ser449. Positions Arg440–Ser449 are enriched in basic and acidic residues.

The protein belongs to the glutamyl-tRNA reductase family. Homodimer.

The catalysed reaction is (S)-4-amino-5-oxopentanoate + tRNA(Glu) + NADP(+) = L-glutamyl-tRNA(Glu) + NADPH + H(+). The protein operates within porphyrin-containing compound metabolism; protoporphyrin-IX biosynthesis; 5-aminolevulinate from L-glutamyl-tRNA(Glu): step 1/2. In terms of biological role, catalyzes the NADPH-dependent reduction of glutamyl-tRNA(Glu) to glutamate 1-semialdehyde (GSA). This is Glutamyl-tRNA reductase from Halorhodospira halophila (strain DSM 244 / SL1) (Ectothiorhodospira halophila (strain DSM 244 / SL1)).